Here is a 608-residue protein sequence, read N- to C-terminus: Granule-bound starch synthase 1, chloroplastic/amyloplastic (608 aa).

The N-terminal 78 residues, 1–78 (MATVIAAHFV…NGRPAAKIIC (78 aa)), are a transit peptide targeting the chloroplast. An ADP-alpha-D-glucose-binding site is contributed by lysine 96. The disordered stretch occupies residues 587–608 (GSEPGTEGEEIAPLAKENVPTP).

Belongs to the glycosyltransferase 1 family. Bacterial/plant glycogen synthase subfamily. Synthesized in a number of different organs, but most abundantly in tubers.

The protein resides in the plastid. It is found in the chloroplast. Its subcellular location is the amyloplast. It carries out the reaction an NDP-alpha-D-glucose + [(1-&gt;4)-alpha-D-glucosyl](n) = [(1-&gt;4)-alpha-D-glucosyl](n+1) + a ribonucleoside 5'-diphosphate + H(+). The protein operates within glycan biosynthesis; starch biosynthesis. Its function is as follows. Responsible for the synthesis of amylose in reserve starch. This is Granule-bound starch synthase 1, chloroplastic/amyloplastic (WAXY) from Manihot esculenta (Cassava).